The chain runs to 367 residues: MASRPDTDDYLNLFLNDVPLMDVRAPVEFAKGSFPSAENAPLMNDEERHRVGICYKEKGQDKAIELGHQLVSGDIKAQRIEAWKRFVAQHPEGYLFCFRGGLRSRLTQQWIRDSGIDYPLVKGGYKALRRFLIDSLEAQIESGQFRILSGRTGTGKTRVLMQLPNPVDLEGLANHRGSSFGRQVTPQPSQIDFENRLGVAMLKARHQAGGPIYLEDESRLIGRCALPETLRARMSESPLLILEQAMEERIAIIRADYVEGMLASYRARDGEDAGWLNFRDYLLSAIDRIRKRLGGERYQKLRNLMLQALDQQEANGSLEGHHGWIEALLTDYYDPMYDYQLTQKQGEILVRGGPEVITEWARSRTST.

Residues 14 to 137 enclose the Rhodanese domain; that stretch reads FLNDVPLMDV…LRRFLIDSLE (124 aa). C97 acts as the S-selanylcysteine intermediate in catalysis.

It belongs to the SelU family. In terms of assembly, monomer.

The enzyme catalyses 5-methylaminomethyl-2-thiouridine(34) in tRNA + selenophosphate + (2E)-geranyl diphosphate + H2O + H(+) = 5-methylaminomethyl-2-selenouridine(34) in tRNA + (2E)-thiogeraniol + phosphate + diphosphate. The catalysed reaction is 5-methylaminomethyl-2-thiouridine(34) in tRNA + (2E)-geranyl diphosphate = 5-methylaminomethyl-S-(2E)-geranyl-thiouridine(34) in tRNA + diphosphate. It catalyses the reaction 5-methylaminomethyl-S-(2E)-geranyl-thiouridine(34) in tRNA + selenophosphate + H(+) = 5-methylaminomethyl-2-(Se-phospho)selenouridine(34) in tRNA + (2E)-thiogeraniol. It carries out the reaction 5-methylaminomethyl-2-(Se-phospho)selenouridine(34) in tRNA + H2O = 5-methylaminomethyl-2-selenouridine(34) in tRNA + phosphate. In terms of biological role, involved in the post-transcriptional modification of the uridine at the wobble position (U34) of tRNA(Lys), tRNA(Glu) and tRNA(Gln). Catalyzes the conversion of 2-thiouridine (S2U-RNA) to 2-selenouridine (Se2U-RNA). Acts in a two-step process involving geranylation of 2-thiouridine (S2U) to S-geranyl-2-thiouridine (geS2U) and subsequent selenation of the latter derivative to 2-selenouridine (Se2U) in the tRNA chain. This chain is tRNA 2-selenouridine synthase, found in Marinobacter nauticus (strain ATCC 700491 / DSM 11845 / VT8) (Marinobacter aquaeolei).